The sequence spans 258 residues: Cobalt-precorrin-4 C(11)-methyltransferase (258 aa).

Belongs to the precorrin methyltransferase family. As to quaternary structure, homodimer.

It catalyses the reaction Co-precorrin-4 + S-adenosyl-L-methionine = Co-precorrin-5A + S-adenosyl-L-homocysteine + H(+). The protein operates within cofactor biosynthesis; adenosylcobalamin biosynthesis; cob(II)yrinate a,c-diamide from sirohydrochlorin (anaerobic route): step 4/10. Functionally, catalyzes the methylation of C-11 in cobalt-precorrin-4 to form cobalt-precorrin-5A. This Priestia megaterium (Bacillus megaterium) protein is Cobalt-precorrin-4 C(11)-methyltransferase (cbiF).